The sequence spans 135 residues: Transcription antitermination protein NusB (135 aa).

The protein belongs to the NusB family.

Its function is as follows. Involved in transcription antitermination. Required for transcription of ribosomal RNA (rRNA) genes. Binds specifically to the boxA antiterminator sequence of the ribosomal RNA (rrn) operons. This Clostridium acetobutylicum (strain ATCC 824 / DSM 792 / JCM 1419 / IAM 19013 / LMG 5710 / NBRC 13948 / NRRL B-527 / VKM B-1787 / 2291 / W) protein is Transcription antitermination protein NusB.